Here is a 169-residue protein sequence, read N- to C-terminus: NADH-quinone oxidoreductase subunit B (169 aa).

The [4Fe-4S] cluster site is built by Cys-42, Cys-43, Cys-107, and Cys-136.

It belongs to the complex I 20 kDa subunit family. As to quaternary structure, NDH-1 is composed of 14 different subunits. Subunits NuoB, C, D, E, F, and G constitute the peripheral sector of the complex. [4Fe-4S] cluster serves as cofactor.

It localises to the cell inner membrane. The enzyme catalyses a quinone + NADH + 5 H(+)(in) = a quinol + NAD(+) + 4 H(+)(out). Functionally, NDH-1 shuttles electrons from NADH, via FMN and iron-sulfur (Fe-S) centers, to quinones in the respiratory chain. The immediate electron acceptor for the enzyme in this species is believed to be ubiquinone. Couples the redox reaction to proton translocation (for every two electrons transferred, four hydrogen ions are translocated across the cytoplasmic membrane), and thus conserves the redox energy in a proton gradient. The sequence is that of NADH-quinone oxidoreductase subunit B from Helicobacter hepaticus (strain ATCC 51449 / 3B1).